A 556-amino-acid chain; its full sequence is Arginine--tRNA ligase (556 aa).

Positions Ala-132–His-142 match the 'HIGH' region motif.

The protein belongs to the class-I aminoacyl-tRNA synthetase family. In terms of assembly, monomer.

Its subcellular location is the cytoplasm. The catalysed reaction is tRNA(Arg) + L-arginine + ATP = L-arginyl-tRNA(Arg) + AMP + diphosphate. The chain is Arginine--tRNA ligase from Bacillus velezensis (strain DSM 23117 / BGSC 10A6 / LMG 26770 / FZB42) (Bacillus amyloliquefaciens subsp. plantarum).